A 282-amino-acid polypeptide reads, in one-letter code: Probable endonuclease 4 (282 aa).

Residues H69, H109, E145, D179, H182, H216, D229, H231, and E261 each contribute to the Zn(2+) site.

Belongs to the AP endonuclease 2 family. Requires Zn(2+) as cofactor.

The catalysed reaction is Endonucleolytic cleavage to 5'-phosphooligonucleotide end-products.. In terms of biological role, endonuclease IV plays a role in DNA repair. It cleaves phosphodiester bonds at apurinic or apyrimidinic (AP) sites, generating a 3'-hydroxyl group and a 5'-terminal sugar phosphate. The chain is Probable endonuclease 4 from Edwardsiella ictaluri (strain 93-146).